Reading from the N-terminus, the 100-residue chain is Elastin (100 aa).

4-hydroxyproline occurs at positions 72 and 86. A disulfide bridge connects residues cysteine 90 and cysteine 95.

Belongs to the elastin family. In terms of assembly, the polymeric elastin chains are cross-linked together into an extensible 3D network. Forms a ternary complex with BGN and MFAP2. Interacts with MFAP2 via divalent cations (calcium &gt; magnesium &gt; manganese) in a dose-dependent and saturating manner. Interacts with FBLN5 and FBN1. Forms a ternary complex with FBN1 and FBLN2 or FBLN5. Interacts with MFAP4 in a Ca (2+)-dependent manner; this interaction promotes ELN self-assembly. Interacts with EFEMP2 with moderate affinity. Elastin is formed through the cross-linking of its soluble precursor tropoelastin. Cross-linking is initiated through the action of lysyl oxidase on exposed lysines to form allysine. Subsequent spontaneous condensation reactions with other allysine or unmodified lysine residues result in various bi-, tri-, and tetrafunctional cross-links. The most abundant cross-links in mature elastin fibers are lysinonorleucine, allysine aldol, desmosine, and isodesmosine. Post-translationally, hydroxylation on proline residues within the sequence motif, GXPG, is most likely to be 4-hydroxy as this fits the requirement for 4-hydroxylation in vertebrates.

It is found in the secreted. It localises to the extracellular space. The protein resides in the extracellular matrix. Its function is as follows. Major structural protein of tissues such as aorta and nuchal ligament, which must expand rapidly and recover completely. Molecular determinant of the late arterial morphogenesis, stabilizing arterial structure by regulating proliferation and organization of vascular smooth muscle. The chain is Elastin (ELN) from Ovis aries (Sheep).